The sequence spans 390 residues: Aspartate carbamoyltransferase, chloroplastic (390 aa).

Residues 1–68 (MSIASSLTSA…NLTRNVGPVR (68 aa)) constitute a chloroplast transit peptide. Residues R136 and T137 each contribute to the carbamoyl phosphate site. The UMP site is built by R136 and T137. K166 is an L-aspartate binding site. Carbamoyl phosphate contacts are provided by R187, H215, and Q218. Positions 187 and 215 each coordinate UMP. UMP is bound by residues R248 and R310. The L-aspartate site is built by R248 and R310. Carbamoyl phosphate is bound by residues L350 and P351.

This sequence belongs to the aspartate/ornithine carbamoyltransferase superfamily. ATCase family. Homotrimer.

Its subcellular location is the plastid. The protein resides in the chloroplast. The enzyme catalyses carbamoyl phosphate + L-aspartate = N-carbamoyl-L-aspartate + phosphate + H(+). It participates in pyrimidine metabolism; UMP biosynthesis via de novo pathway; (S)-dihydroorotate from bicarbonate: step 2/3. Its activity is regulated as follows. Feedback inhibited by UMP. In terms of biological role, catalyzes the condensation of carbamoyl phosphate and aspartate to form carbamoyl aspartate and inorganic phosphate, the committed step in the de novo pyrimidine nucleotide biosynthesis pathway. This is Aspartate carbamoyltransferase, chloroplastic (PYRB) from Arabidopsis thaliana (Mouse-ear cress).